An 87-amino-acid polypeptide reads, in one-letter code: Protein ORF3 (87 aa).

The segment at 58-87 (GALNNAPREPSAPPLSQTLSPRQVLARYQM) is disordered. Residues 67–70 (PSAP) carry the PTAP/PSAP motif motif.

It belongs to the hepevirus ORF3 protein family. Palmitoylated in the N-terminus.

The protein localises to the host endoplasmic reticulum membrane. The protein resides in the host cytoplasm. It is found in the host cytoskeleton. Its subcellular location is the virion. It localises to the host cell membrane. Its function is as follows. Small multifunctional phosphoprotein involved in virion morphogenesis, egress and counteracting host innate immunity. The protein is Protein ORF3 of Avian hepatitis E virus (isolate Chicken/California/Meng) (AHEV).